The sequence spans 362 residues: Peptide chain release factor 1 (362 aa).

The residue at position 240 (glutamine 240) is an N5-methylglutamine.

Belongs to the prokaryotic/mitochondrial release factor family. In terms of processing, methylated by PrmC. Methylation increases the termination efficiency of RF1.

It is found in the cytoplasm. Its function is as follows. Peptide chain release factor 1 directs the termination of translation in response to the peptide chain termination codons UAG and UAA. The sequence is that of Peptide chain release factor 1 from Bifidobacterium longum (strain DJO10A).